An 867-amino-acid polypeptide reads, in one-letter code: Alanine--tRNA ligase (867 aa).

Positions 559, 563, 661, and 665 each coordinate Zn(2+).

The protein belongs to the class-II aminoacyl-tRNA synthetase family. Requires Zn(2+) as cofactor.

Its subcellular location is the cytoplasm. It carries out the reaction tRNA(Ala) + L-alanine + ATP = L-alanyl-tRNA(Ala) + AMP + diphosphate. Functionally, catalyzes the attachment of alanine to tRNA(Ala) in a two-step reaction: alanine is first activated by ATP to form Ala-AMP and then transferred to the acceptor end of tRNA(Ala). Also edits incorrectly charged Ser-tRNA(Ala) and Gly-tRNA(Ala) via its editing domain. The polypeptide is Alanine--tRNA ligase (Aquifex aeolicus (strain VF5)).